A 194-amino-acid chain; its full sequence is MIHNEEEQLEKKIEKNQDPKINHKKYDSDNLIKKNLIQFLEIQLKESEEKIIEKEEIVEKEIVLIHNRFNKEIEKSIKFSLEKIIIDFLPIIDNIERALNLIETINLKQEKYTEILKKLQFICNLLEKFFYLFNIKKINDTNVLFNPSIHQAMSIHYTNDIISNQIVTVMQSGYILHKSRLLRPAMVVVSKEKI.

Residues 1 to 22 are disordered; it reads MIHNEEEQLEKKIEKNQDPKIN.

Belongs to the GrpE family. As to quaternary structure, homodimer.

The protein resides in the cytoplasm. In terms of biological role, participates actively in the response to hyperosmotic and heat shock by preventing the aggregation of stress-denatured proteins, in association with DnaK and GrpE. It is the nucleotide exchange factor for DnaK and may function as a thermosensor. Unfolded proteins bind initially to DnaJ; upon interaction with the DnaJ-bound protein, DnaK hydrolyzes its bound ATP, resulting in the formation of a stable complex. GrpE releases ADP from DnaK; ATP binding to DnaK triggers the release of the substrate protein, thus completing the reaction cycle. Several rounds of ATP-dependent interactions between DnaJ, DnaK and GrpE are required for fully efficient folding. This is Protein GrpE 1 from Buchnera aphidicola subsp. Acyrthosiphon pisum (strain APS) (Acyrthosiphon pisum symbiotic bacterium).